The following is a 284-amino-acid chain: Bifunctional protein FolD (284 aa).

NADP(+) contacts are provided by residues G166–S168 and I232.

Belongs to the tetrahydrofolate dehydrogenase/cyclohydrolase family. As to quaternary structure, homodimer.

The catalysed reaction is (6R)-5,10-methylene-5,6,7,8-tetrahydrofolate + NADP(+) = (6R)-5,10-methenyltetrahydrofolate + NADPH. It catalyses the reaction (6R)-5,10-methenyltetrahydrofolate + H2O = (6R)-10-formyltetrahydrofolate + H(+). Its pathway is one-carbon metabolism; tetrahydrofolate interconversion. Functionally, catalyzes the oxidation of 5,10-methylenetetrahydrofolate to 5,10-methenyltetrahydrofolate and then the hydrolysis of 5,10-methenyltetrahydrofolate to 10-formyltetrahydrofolate. This Pseudomonas entomophila (strain L48) protein is Bifunctional protein FolD.